Consider the following 70-residue polypeptide: DNA-directed RNA polymerase subunit epsilon (70 aa).

Belongs to the RNA polymerase subunit epsilon family. As to quaternary structure, RNAP is composed of a core of 2 alpha, a beta and a beta' subunit. The core is associated with a delta subunit, and at least one of epsilon or omega. When a sigma factor is associated with the core the holoenzyme is formed, which can initiate transcription.

It catalyses the reaction RNA(n) + a ribonucleoside 5'-triphosphate = RNA(n+1) + diphosphate. A non-essential component of RNA polymerase (RNAP). The sequence is that of DNA-directed RNA polymerase subunit epsilon from Enterococcus faecalis (strain ATCC 700802 / V583).